Reading from the N-terminus, the 839-residue chain is Genome polyprotein (839 aa).

Residues 55 to 66 show a composition bias toward polar residues; it reads TAEVGSHQSEPL. The tract at residues 55-76 is disordered; that stretch reads TAEVGSHQSEPLKTSVDKPGSK. Short sequence motifs ((L)YPX(n)L motif) lie at residues 167-171 and 200-205; these read YPHGL and YPVWEL. The span at 496 to 510 shows a compositional bias: polar residues; the sequence is SGGFSTTVSTEQNVP. Disordered stretches follow at residues 496–530 and 773–792; these read SGGFSTTVSTEQNVPDPQVGITTPKDLKGKANKGK and GDLESSVDDPRTDEDRRFES. Residues 766–836 are involved in P1-2A pentamerization; the sequence is MLDRIAGGDL…RKLKGLFSQS (71 aa). Basic and acidic residues predominate over residues 780–792; it reads DDPRTDEDRRFES.

Belongs to the picornaviridae polyprotein family. As to quaternary structure, homodimer. Homomultimer; probably interacts with membranes in a multimeric form. Seems to assemble into amyloid-like fibers. Homopentamer. Homooligomer. In terms of assembly, interacts with capsid protein VP2. Interacts with capsid protein VP3. As to quaternary structure, interacts with capsid protein VP1. Interacts with capsid protein VP3. Interacts with capsid protein VP1. Interacts with capsid protein VP2. In terms of processing, specific enzymatic cleavages by viral protease in vivo yield a variety of precursors and mature proteins. Polyprotein processing intermediates are produced, such as P1-2A which is a functional precursor of the structural proteins, VP0 which is a VP4-VP2 precursor, VP1-2A precursor, 3ABC precursor which is a stable and catalytically active precursor of 3A, 3B and 3C proteins, 3AB and 3CD precursors. The assembly signal 2A is removed from VP1-2A by a host protease, possibly host Cathepsin L. This cleavage occurs over a region of 3 amino-acids probably generating VP1 proteins with heterogeneous C-termini. During virion maturation, immature virions are rendered infectious following cleavage of VP0 into VP4 and VP2. This maturation seems to be an autocatalytic event triggered by the presence of RNA in the capsid and is followed by a conformational change of the particle. Post-translationally, the assembly signal 2A is removed from VP1-2A by a host protease, possibly host Cathepsin L in naked virions. This cleavage does not occur in enveloped virions. This cleavage occurs over a region of 3 amino-acids probably generating VP1 proteins with heterogeneous C-termini. In terms of processing, unlike other picornaviruses, does not seem to be myristoylated.

Its subcellular location is the virion. It localises to the host endosome. The protein localises to the host multivesicular body. It is found in the host membrane. Functionally, capsid proteins VP1, VP2, and VP3 form a closed capsid enclosing the viral positive strand RNA genome. All these proteins contain a beta-sheet structure called beta-barrel jelly roll. Together they form an icosahedral capsid (T=3) composed of 60 copies of each VP1, VP2, and VP3, with a diameter of approximately 300 Angstroms. VP1 is situated at the 12 fivefold axes, whereas VP2 and VP3 are located at the quasi-sixfold axes. The naked capsid interacts with the host receptor HAVCR1 to provide virion attachment to and probably entry into the target cell. VP0 precursor is a component of the immature procapsids. Its function is as follows. Plays a role in the assembly of the 12 pentamers into an icosahedral structure. Has not been detected in mature virions, supposedly owing to its small size. In terms of biological role, precursor component of immature procapsids that corresponds to an extended form of the structural protein VP1. After maturation, possibly by the host Cathepsin L, the assembly signal 2A is cleaved to give rise to the mature VP1 protein. Functionally, affects membrane integrity and causes an increase in membrane permeability. Functions as a viroporin. Affects membrane integrity and causes an increase in membrane permeability. Involved in host intracellular membrane rearrangements probably to give rise to the viral factories. Does not disrupt calcium homeostasis or glycoprotein trafficking. Antagonizes the innate immune response of the host by suppressing IFN-beta synthesis, which it achieves by interfering with the RIG-I/IFIH1 pathway. The sequence is that of Genome polyprotein from Callithrix (Owl-faced monkey).